A 258-amino-acid polypeptide reads, in one-letter code: Type III pantothenate kinase (258 aa).

6-13 (DAGNTRIK) is a binding site for ATP. Substrate-binding positions include Tyr98 and 105-108 (GSDR). The Proton acceptor role is filled by Asp107. Thr131 provides a ligand contact to ATP. Thr184 provides a ligand contact to substrate.

This sequence belongs to the type III pantothenate kinase family. In terms of assembly, homodimer. NH4(+) is required as a cofactor. The cofactor is K(+).

Its subcellular location is the cytoplasm. It carries out the reaction (R)-pantothenate + ATP = (R)-4'-phosphopantothenate + ADP + H(+). It participates in cofactor biosynthesis; coenzyme A biosynthesis; CoA from (R)-pantothenate: step 1/5. In terms of biological role, catalyzes the phosphorylation of pantothenate (Pan), the first step in CoA biosynthesis. The polypeptide is Type III pantothenate kinase (Herminiimonas arsenicoxydans).